Consider the following 255-residue polypeptide: Kallikrein-15 (255 aa).

An N-terminal signal peptide occupies residues 1 to 15 (MWLLLPLSFLLTSTA). The propeptide at 16-20 (QDGGK) is activation peptide. The tract at residues 21–253 (LLEGEECAPH…YVKWIRETMK (233 aa)) is serine protease. Cysteine 46 and cysteine 62 are joined by a disulfide. Residues histidine 61 and aspartate 105 each act as charge relay system in the active site. Cystine bridges form between cysteine 137–cysteine 214, cysteine 179–cysteine 193, and cysteine 204–cysteine 229. Asparagine 170 is a glycosylation site (N-linked (GlcNAc...) asparagine). Serine 208 acts as the Charge relay system in catalysis. An N-linked (GlcNAc...) asparagine glycan is attached at asparagine 231.

Belongs to the peptidase S1 family. Kallikrein subfamily.

It is found in the secreted. Protease whose physiological substrate is not yet known. The chain is Kallikrein-15 (KLK15) from Saguinus oedipus (Cotton-top tamarin).